We begin with the raw amino-acid sequence, 327 residues long: Cyclin-A3-3 (327 aa).

It belongs to the cyclin family. Cyclin AB subfamily.

This chain is Cyclin-A3-3 (CYCA3-3), found in Arabidopsis thaliana (Mouse-ear cress).